Reading from the N-terminus, the 122-residue chain is Neutral phospholipase A2 agkistrodotoxin (122 aa).

7 disulfide bridges follow: cysteine 26–cysteine 115, cysteine 28–cysteine 44, cysteine 43–cysteine 95, cysteine 49–cysteine 122, cysteine 50–cysteine 88, cysteine 57–cysteine 81, and cysteine 75–cysteine 86. 3 residues coordinate Ca(2+): tyrosine 27, glycine 29, and glycine 31. Residue histidine 47 is part of the active site. Aspartate 48 lines the Ca(2+) pocket. Aspartate 89 is a catalytic residue.

The cofactor is Ca(2+). As to expression, expressed by the venom gland.

Its subcellular location is the secreted. It catalyses the reaction a 1,2-diacyl-sn-glycero-3-phosphocholine + H2O = a 1-acyl-sn-glycero-3-phosphocholine + a fatty acid + H(+). Functionally, snake venom phospholipase A2 (PLA2) that inhibits neuromuscular transmission by blocking acetylcholine release from the nerve termini. PLA2 catalyzes the calcium-dependent hydrolysis of the 2-acyl groups in 3-sn-phosphoglycerides. The sequence is that of Neutral phospholipase A2 agkistrodotoxin from Gloydius halys (Chinese water mocassin).